The sequence spans 363 residues: Phosphoribosylformylglycinamidine cyclo-ligase (363 aa).

Belongs to the AIR synthase family.

It is found in the cytoplasm. It catalyses the reaction 2-formamido-N(1)-(5-O-phospho-beta-D-ribosyl)acetamidine + ATP = 5-amino-1-(5-phospho-beta-D-ribosyl)imidazole + ADP + phosphate + H(+). It participates in purine metabolism; IMP biosynthesis via de novo pathway; 5-amino-1-(5-phospho-D-ribosyl)imidazole from N(2)-formyl-N(1)-(5-phospho-D-ribosyl)glycinamide: step 2/2. This Bartonella tribocorum (strain CIP 105476 / IBS 506) protein is Phosphoribosylformylglycinamidine cyclo-ligase.